Here is a 278-residue protein sequence, read N- to C-terminus: Bis(5'-nucleosyl)-tetraphosphatase, symmetrical (278 aa).

It belongs to the Ap4A hydrolase family.

The enzyme catalyses P(1),P(4)-bis(5'-adenosyl) tetraphosphate + H2O = 2 ADP + 2 H(+). Hydrolyzes diadenosine 5',5'''-P1,P4-tetraphosphate to yield ADP. In Methylococcus capsulatus (strain ATCC 33009 / NCIMB 11132 / Bath), this protein is Bis(5'-nucleosyl)-tetraphosphatase, symmetrical.